The sequence spans 113 residues: Beta-defensin 112 (113 aa).

3 disulfide bridges follow: Cys54/Cys82, Cys61/Cys75, and Cys65/Cys83.

Belongs to the beta-defensin family.

Its subcellular location is the secreted. Its function is as follows. Has antibacterial activity. This is Beta-defensin 112 (DEFB112) from Homo sapiens (Human).